The chain runs to 427 residues: Serine--tRNA ligase (427 aa).

231 to 233 (TAE) serves as a coordination point for L-serine. An ATP-binding site is contributed by 262–264 (RSE). An L-serine-binding site is contributed by Glu-285. 349–352 (EISS) is a binding site for ATP. Position 385 (Ser-385) interacts with L-serine.

This sequence belongs to the class-II aminoacyl-tRNA synthetase family. Type-1 seryl-tRNA synthetase subfamily. As to quaternary structure, homodimer. The tRNA molecule binds across the dimer.

Its subcellular location is the cytoplasm. The catalysed reaction is tRNA(Ser) + L-serine + ATP = L-seryl-tRNA(Ser) + AMP + diphosphate + H(+). It carries out the reaction tRNA(Sec) + L-serine + ATP = L-seryl-tRNA(Sec) + AMP + diphosphate + H(+). It functions in the pathway aminoacyl-tRNA biosynthesis; selenocysteinyl-tRNA(Sec) biosynthesis; L-seryl-tRNA(Sec) from L-serine and tRNA(Sec): step 1/1. Its function is as follows. Catalyzes the attachment of serine to tRNA(Ser). Is also able to aminoacylate tRNA(Sec) with serine, to form the misacylated tRNA L-seryl-tRNA(Sec), which will be further converted into selenocysteinyl-tRNA(Sec). The chain is Serine--tRNA ligase from Hahella chejuensis (strain KCTC 2396).